We begin with the raw amino-acid sequence, 294 residues long: Ankyrin repeat and SOCS box protein 9 (294 aa).

At methionine 1 the chain carries N-acetylmethionine. ANK repeat units follow at residues 35 to 64 (SDWSPMHEAAIHGHQLSLRNLISQGWAVNI), 68 to 97 (DHVSPLHEACLGGHLSCVKILLKHGAQVNG), 101 to 130 (DWHTPLFNACVSGSWDCVNLLLQHGASVQP), 133 to 162 (DLASPIHEAARRGHVECVNSLIAYGGNIDH), 166 to 195 (HLGTPLYLACENQQRACVKKLLESGADVNQ), and 198 to 227 (GQDSPLHAVARTASEELACLLMDFGADTQA). Serine 51 carries the phosphoserine modification. The SOCS box domain maps to 240–294 (PPESPLAQLFLEREGPPSLMQLCRLRIRKCFGIQQHHKITKLVLPEDLKQFLLHL).

The protein belongs to the ankyrin SOCS box (ASB) family. As to quaternary structure, substrate-recognition component of the ECS(ASB9) complex, composed of ASB9, CUL5, ELOB, ELOC and RNF7/RBX2. As to expression, predominantly expressed in testis, kidney, and liver.

It is found in the mitochondrion. Its pathway is protein modification; protein ubiquitination. Its function is as follows. Substrate-recognition component of a cullin-5-RING E3 ubiquitin-protein ligase complex (ECS complex, also named CRL5 complex), which mediates the ubiquitination and subsequent proteasomal degradation of target proteins. The ECS(ASB9) complex catalyzes ubiquitination of creatine kinases CKB and CKMT1A. Functionally, does not interact with the Elongin BC complex, likely to be a negative regulator of isoform 1. The chain is Ankyrin repeat and SOCS box protein 9 from Homo sapiens (Human).